We begin with the raw amino-acid sequence, 465 residues long: Cysteine--tRNA ligase (465 aa).

Residue Cys30 participates in Zn(2+) binding. The 'HIGH' region motif lies at 32 to 42 (MTVYDYCHVGH). Cys214, His239, and Glu243 together coordinate Zn(2+). The 'KMSKS' region signature appears at 271–275 (KMSKS). Lys274 contributes to the ATP binding site.

It belongs to the class-I aminoacyl-tRNA synthetase family. As to quaternary structure, monomer. The cofactor is Zn(2+).

The protein resides in the cytoplasm. The enzyme catalyses tRNA(Cys) + L-cysteine + ATP = L-cysteinyl-tRNA(Cys) + AMP + diphosphate. The polypeptide is Cysteine--tRNA ligase (Ralstonia nicotianae (strain ATCC BAA-1114 / GMI1000) (Ralstonia solanacearum)).